The primary structure comprises 560 residues: Arginine--tRNA ligase (560 aa).

The 'HIGH' region signature appears at Phe-164–Asp-174.

Belongs to the class-I aminoacyl-tRNA synthetase family. As to quaternary structure, monomer.

It localises to the cytoplasm. The enzyme catalyses tRNA(Arg) + L-arginine + ATP = L-arginyl-tRNA(Arg) + AMP + diphosphate. The protein is Arginine--tRNA ligase of Bordetella pertussis (strain Tohama I / ATCC BAA-589 / NCTC 13251).